A 305-amino-acid chain; its full sequence is UDP-3-O-acyl-N-acetylglucosamine deacetylase (305 aa).

The Zn(2+) site is built by histidine 79, histidine 238, and aspartate 242. Histidine 265 functions as the Proton donor in the catalytic mechanism.

This sequence belongs to the LpxC family. Zn(2+) is required as a cofactor.

It catalyses the reaction a UDP-3-O-[(3R)-3-hydroxyacyl]-N-acetyl-alpha-D-glucosamine + H2O = a UDP-3-O-[(3R)-3-hydroxyacyl]-alpha-D-glucosamine + acetate. Its pathway is glycolipid biosynthesis; lipid IV(A) biosynthesis; lipid IV(A) from (3R)-3-hydroxytetradecanoyl-[acyl-carrier-protein] and UDP-N-acetyl-alpha-D-glucosamine: step 2/6. In terms of biological role, catalyzes the hydrolysis of UDP-3-O-myristoyl-N-acetylglucosamine to form UDP-3-O-myristoylglucosamine and acetate, the committed step in lipid A biosynthesis. In Aliivibrio fischeri (strain ATCC 700601 / ES114) (Vibrio fischeri), this protein is UDP-3-O-acyl-N-acetylglucosamine deacetylase.